Here is a 224-residue protein sequence, read N- to C-terminus: Retinoschisin (224 aa).

A signal peptide spans methionine 1 to serine 23. Residues cysteine 63 to cysteine 219 form the F5/8 type C domain. 2 cysteine pairs are disulfide-bonded: cysteine 63/cysteine 219 and cysteine 110/cysteine 142.

As to quaternary structure, homooctamer of 4 homodimers; disulfide-linked. The homooctamer has a flat, cogwheel structure with a diameter of about 14 nm. Two stacked octamers can assemble to form a hexadecamer. In terms of tissue distribution, restricted to the retina (at protein level). Detected in the inner segment of the photoreceptors, the inner nuclear layer, the inner plexiform layer and the ganglion cell layer (at protein level). At the macula, expressed in both the outer and inner nuclear layers and in the inner plexiform layer (at protein level). Detected in retina. Detected only within the photoreceptor cell layer, most prominently within the inner segments of the photoreceptors. Undetectable in the inner plexiform layers and the inner nuclear layer.

It is found in the secreted. The protein resides in the cell membrane. Its function is as follows. Binds negatively charged membrane lipids, such as phosphatidylserine and phosphoinositides. May play a role in cell-cell adhesion processes in the retina, via homomeric interaction between octamers present on the surface of two neighboring cells. Required for normal structure and function of the retina. In Homo sapiens (Human), this protein is Retinoschisin (RS1).